A 443-amino-acid polypeptide reads, in one-letter code: Xaa-Pro dipeptidase (443 aa).

Residues Asp246, Asp257, His339, Glu384, and Glu423 each coordinate Mn(2+).

The protein belongs to the peptidase M24B family. Bacterial-type prolidase subfamily. It depends on Mn(2+) as a cofactor.

The catalysed reaction is Xaa-L-Pro dipeptide + H2O = an L-alpha-amino acid + L-proline. Its function is as follows. Splits dipeptides with a prolyl residue in the C-terminal position. This Shigella dysenteriae serotype 1 (strain Sd197) protein is Xaa-Pro dipeptidase.